The chain runs to 551 residues: Pentatricopeptide repeat-containing protein At3g13150 (551 aa).

The segment at 22 to 67 (ATAKSAKPRSQTKSTKFPSKLKASTASVGDGGQSSNDAKDSKNSKL) is disordered. Over residues 29-48 (PRSQTKSTKFPSKLKASTAS) the composition is skewed to polar residues. The segment covering 58-67 (DAKDSKNSKL) has biased composition (basic and acidic residues). 7 PPR repeats span residues 121-155 (SEDF…NCER), 156-191 (TVKS…GITP), 192-226 (DLVT…GFEP), 227-261 (DLIS…NLSP), 262-296 (NIRS…GISP), 297-331 (DVHT…GLTP), and 332-366 (DTVT…KLLS). Disordered stretches follow at residues 409 to 435 (GKKK…SPDT) and 449 to 551 (SSSD…LLDD). Residues 415–435 (SSPVSSSAKTTSTPVSSSPDT) show a composition bias toward low complexity.

Belongs to the PPR family. P subfamily.

The polypeptide is Pentatricopeptide repeat-containing protein At3g13150 (Arabidopsis thaliana (Mouse-ear cress)).